Consider the following 225-residue polypeptide: MSLVASLQLILPPRPRSTKLLCSLQSPKQEQELSSTSPPISLLPKLISFALAISLTSFSPALAIPSLSSSQPLTTPFTQSKFVQTGLLNGKIRPCPSTNPGCVSTNPTSSSFSFPLTIPETDTQDPIEKLKEAIMSTQKNPKFVVLEDTPYGRYVEAEVEGGGFSRDVMEFLVKQDVVAYRCMATKVTFVYPFTTAFGDSKGQEERLKKLIDQLGWYAPTFESME.

The protein localises to the plastid. It localises to the chloroplast thylakoid lumen. This chain is Thylakoid lumenal 17.9 kDa protein, chloroplastic, found in Arabidopsis thaliana (Mouse-ear cress).